A 330-amino-acid chain; its full sequence is uncharacterized protein (330 aa).

This is an uncharacterized protein from Archaeoglobus fulgidus (strain ATCC 49558 / DSM 4304 / JCM 9628 / NBRC 100126 / VC-16).